We begin with the raw amino-acid sequence, 769 residues long: Elongation factor G, mitochondrial (769 aa).

Residues 1 to 42 (MSKFLRGISSISSASLKARASNFGVFHGVCSARNLHQSRLCL) constitute a mitochondrion transit peptide. The region spanning 74–356 (TRLRNIGVSA…AVVDYLPQPN (283 aa)) is the tr-type G domain. Residues 83–90 (AHIDSGKT), 154–158 (DTPGH), and 208–211 (NKMD) each bind GTP.

Belongs to the TRAFAC class translation factor GTPase superfamily. Classic translation factor GTPase family. EF-G/EF-2 subfamily.

The protein resides in the mitochondrion. Its pathway is protein biosynthesis; polypeptide chain elongation. Functionally, mitochondrial GTPase that catalyzes the GTP-dependent ribosomal translocation step during translation elongation. During this step, the ribosome changes from the pre-translocational (PRE) to the post-translocational (POST) state as the newly formed A-site-bound peptidyl-tRNA and P-site-bound deacylated tRNA move to the P and E sites, respectively. Catalyzes the coordinated movement of the two tRNA molecules, the mRNA and conformational changes in the ribosome. This chain is Elongation factor G, mitochondrial, found in Debaryomyces hansenii (strain ATCC 36239 / CBS 767 / BCRC 21394 / JCM 1990 / NBRC 0083 / IGC 2968) (Yeast).